The primary structure comprises 147 residues: MAPSGPTPYSHRPQIKHYGTFLDCMRYTLNDESKVDDRCSDIHNSLAQSNVTSSMSVMNDSEEYPLINGPSMQAEDPKSVFYKVRKPDRSRDFSWQNLNSHGNSGLRREKYIRSSKRRWKNPEIFKVSLKCESIGAGNGIKISFSFF.

This is an uncharacterized protein from Gallid herpesvirus 2 (strain Chicken/Md5/ATCC VR-987) (GaHV-2).